A 184-amino-acid chain; its full sequence is ATP-dependent protease subunit HslV (184 aa).

Residue Thr-12 is part of the active site. Positions 166, 169, and 172 each coordinate Na(+).

It belongs to the peptidase T1B family. HslV subfamily. A double ring-shaped homohexamer of HslV is capped on each side by a ring-shaped HslU homohexamer. The assembly of the HslU/HslV complex is dependent on binding of ATP.

The protein localises to the cytoplasm. The enzyme catalyses ATP-dependent cleavage of peptide bonds with broad specificity.. Its activity is regulated as follows. Allosterically activated by HslU binding. Functionally, protease subunit of a proteasome-like degradation complex believed to be a general protein degrading machinery. This chain is ATP-dependent protease subunit HslV, found in Brucella canis (strain ATCC 23365 / NCTC 10854 / RM-666).